Here is a 443-residue protein sequence, read N- to C-terminus: Mimosinase, chloroplastic (443 aa).

Residues 1–43 (MALSSTFLNPLVSSVAVNPQPKITSGKGFRVNCLIRTQQTVIK) constitute a chloroplast transit peptide. Pyridoxal 5'-phosphate contacts are provided by tyrosine 105, arginine 107, glycine 135, methionine 136, serine 254, and threonine 256. At lysine 257 the chain carries N6-(pyridoxal phosphate)lysine.

Belongs to the trans-sulfuration enzymes family. In terms of assembly, forms homodimers. May form homotetramers from two homodimers. The cofactor is pyridoxal 5'-phosphate.

It localises to the plastid. The protein resides in the chloroplast. It catalyses the reaction L-mimosine + H2O = 3-hydroxy-4H-pyrid-4-one + pyruvate + NH4(+). Its function is as follows. Catalyzes the degradation of mimosine, which is a toxic secondary metabolite found in all Leucaena and Mimosa species. The polypeptide is Mimosinase, chloroplastic (Leucaena leucocephala (White popinac)).